The primary structure comprises 157 residues: Transcription inhibitor protein Gfh1 (157 aa).

Residues 1 to 74 (MAREVKLTKA…LEDVLSRAVI (74 aa)) adopt a coiled-coil conformation.

Belongs to the GreA/GreB family. Interacts with RNAP.

Its function is as follows. Inhibits all catalytic activities of RNA polymerase (RNAP) by partially occluding its substrate-binding site and preventing NTP binding. This Thermus aquaticus protein is Transcription inhibitor protein Gfh1 (gfh1).